Reading from the N-terminus, the 147-residue chain is Myoglobin (147 aa).

One can recognise a Globin domain in the interval 2–141 (ADFDAVLKFW…VIADLEANYK (140 aa)). Histidine 60 lines the nitrite pocket. Position 60 (histidine 60) interacts with O2. Residue histidine 89 coordinates heme b.

It belongs to the globin family. In terms of assembly, monomeric.

Its subcellular location is the cytoplasm. It localises to the sarcoplasm. The enzyme catalyses Fe(III)-heme b-[protein] + nitric oxide + H2O = Fe(II)-heme b-[protein] + nitrite + 2 H(+). It catalyses the reaction H2O2 + AH2 = A + 2 H2O. Functionally, monomeric heme protein which primary function is to store oxygen and facilitate its diffusion within muscle tissues. Reversibly binds oxygen through a pentacoordinated heme iron and enables its timely and efficient release as needed during periods of heightened demand. Depending on the oxidative conditions of tissues and cells, and in addition to its ability to bind oxygen, it also has a nitrite reductase activity whereby it regulates the production of bioactive nitric oxide. Under stress conditions, like hypoxia and anoxia, it also protects cells against reactive oxygen species thanks to its pseudoperoxidase activity. This chain is Myoglobin (mb), found in Sarda chiliensis (Pacific bonito).